The sequence spans 152 residues: CASP-like protein 5B1 (152 aa).

Over 1-11 the chain is Cytoplasmic; sequence MKKMIGSPGTM. A helical membrane pass occupies residues 12 to 32; the sequence is SGLILRLGQCATAAASIGVMV. At 33 to 42 the chain is on the extracellular side; sequence SSYDFSNYTA. Asn-39 carries an N-linked (GlcNAc...) asparagine glycan. Residues 43-63 traverse the membrane as a helical segment; that stretch reads FCFLVASMGLQLIWSFGLACL. Over 64-77 the chain is Cytoplasmic; that stretch reads DVYAIRRKSDLRSP. The chain crosses the membrane as a helical span at residues 78 to 98; sequence ILLSLFTVGDWVTALLALAAA. Topologically, residues 99–131 are extracellular; sequence CSSAGVTVLFTKDTEFCRQQPALSCDRFQISVG. The helical transmembrane segment at 132-152 threads the bilayer; the sequence is LSFFNWFLAAISSHTMFWILI.

It belongs to the Casparian strip membrane proteins (CASP) family. In terms of assembly, homodimer and heterodimers. In terms of tissue distribution, expressed in leaves, exclusively in hair cells (e.g. differentiated trichomes and immature cells).

It localises to the cell membrane. In Arabidopsis thaliana (Mouse-ear cress), this protein is CASP-like protein 5B1.